Reading from the N-terminus, the 114-residue chain is Transmembrane protein 256 homolog (114 aa).

A signal peptide spans 1–25; the sequence is MAAGRVWGRLGAVSGALAVTAGAYG. Residues 26–64 are Extracellular-facing; that stretch reads AHGFRRSDRDEYLKELFETGNRYHFLHSLALLAVPHCRR. The helical transmembrane segment at 65 to 85 threads the bilayer; it reads PLLAGSLLTSGIVLFSGTFYY. Residues 86-93 are Cytoplasmic-facing; that stretch reads QALSGDPT. A helical transmembrane segment spans residues 94–114; the sequence is LTKAAPYGGTLLILGWAAMAL.

The protein belongs to the TMEM256 family.

It localises to the cell membrane. In Bufo gargarizans (Asian toad), this protein is Transmembrane protein 256 homolog.